Reading from the N-terminus, the 243-residue chain is Venom nerve growth factor (243 aa).

The signal sequence occupies residues 1-18 (MSMLCYTLIIAFLIGIWA). The propeptide occupies 19–125 (APKSEDNVPL…TLNRNIWANN (107 aa)). The segment covering 47–66 (GLKTSRNTDQHHPTPKKSED) has biased composition (basic and acidic residues). The segment at 47-70 (GLKTSRNTDQHHPTPKKSEDQELG) is disordered. 3 cysteine pairs are disulfide-bonded: Cys-139/Cys-204, Cys-182/Cys-232, and Cys-192/Cys-234. Asn-148 carries an N-linked (GlcNAc...) asparagine glycan.

Belongs to the NGF-beta family. As to quaternary structure, homodimer. In terms of tissue distribution, expressed by the venom gland.

Its subcellular location is the secreted. Functionally, nerve growth factor is important for the development and maintenance of the sympathetic and sensory nervous systems. It stimulates division and differentiation of sympathetic and embryonic sensory neurons as well as basal forebrain cholinergic neurons in the brain. Its relevance in the snake venom is not clear. However, it has been shown to inhibit metalloproteinase-dependent proteolysis of platelet glycoprotein Ib alpha, suggesting a metalloproteinase inhibition to prevent metalloprotease autodigestion and/or protection against prey proteases. Binds a lipid between the two protein chains in the homodimer. The lipid-bound form promotes histamine relase from mouse mast cells, contrary to the lipid-free form. The protein is Venom nerve growth factor of Bungarus multicinctus (Many-banded krait).